The following is a 699-amino-acid chain: MSKINKLEHIRNIGICAHIDAGKTTTTERILYYTGKSHKIGEVHEGGATMDWMEQEQERGITITSAATTCKWQDKVINIIDTPGHVDFTIEVERSLRVLDGAVAVFDGVAGVEPQSETVWRQADKYNVPRMCFVNKMDRMGADFYKCVDMIKDRLGAKSLILQLPIGIEENFKGIINLIKMKAVIWKDESLGAEYFEEDIPTDMQDKAAEYRARLLDMTVELDDTIMERYLSGEEITEEEIKILIRKGTIEAKFYPVLCGSAFKNKGVQPLLDAIVDFLPSPIDIGIVKGIEVSTSEEKDFPISITEPFSALAFKIMNDPFVGSLTFIRIYSGKITSGASVVNTVKNKREKIGRMLLMHANNREDIKEASAGDIVALAGLKDTSTGDTLSDIDTQVVLERMEFPEPVIELAVEPKSTADQEKMGLALSRLAAEDPSFKVSTDHETGQTVIKGMGELHLEIIIDRMRREFKVEANIGAPQVAYRETITTACEIDYTHKKQSGGAGQFARVKIIFEPLKDVIDLKDEDKNKTFVFESKIVGGAVPKEYIPGVEKGLNNIRETGIVAGYPMIDFKATLVDGAFHDVDSSVLAFEIAAKGAFREGMQKGNPKLLEPIMKVEVITPDEYMGDIIGDLNSRRGQIQSMDPRGNAQVVTAYVPLAEMFGYVNTLRSLSQGRAQFSMIFSHYDQVPSQVADIIKAKK.

Residues 8–283 form the tr-type G domain; the sequence is EHIRNIGICA…AIVDFLPSPI (276 aa). GTP contacts are provided by residues 17-24, 81-85, and 135-138; these read AHIDAGKT, DTPGH, and NKMD.

It belongs to the TRAFAC class translation factor GTPase superfamily. Classic translation factor GTPase family. EF-G/EF-2 subfamily.

It is found in the cytoplasm. Catalyzes the GTP-dependent ribosomal translocation step during translation elongation. During this step, the ribosome changes from the pre-translocational (PRE) to the post-translocational (POST) state as the newly formed A-site-bound peptidyl-tRNA and P-site-bound deacylated tRNA move to the P and E sites, respectively. Catalyzes the coordinated movement of the two tRNA molecules, the mRNA and conformational changes in the ribosome. In Rickettsia typhi (strain ATCC VR-144 / Wilmington), this protein is Elongation factor G.